We begin with the raw amino-acid sequence, 257 residues long: General L-amino acid transport ATP-binding protein AapP (257 aa).

One can recognise an ABC transporter domain in the interval 18-252 (VEIVNMNKWY…PQHERTKLFL (235 aa)). Position 50–57 (50–57 (GPSGSGKS)) interacts with ATP.

This sequence belongs to the ABC transporter superfamily.

Its function is as follows. Part of a binding-protein-dependent transport system for L-amino acids, affects the uptake as well as the efflux of these amino acids. Probably responsible for energy coupling to the transport system. This chain is General L-amino acid transport ATP-binding protein AapP (aapP), found in Rhizobium johnstonii (strain DSM 114642 / LMG 32736 / 3841) (Rhizobium leguminosarum bv. viciae).